The primary structure comprises 212 residues: Adenylate kinase (212 aa).

An ATP-binding site is contributed by 10 to 15; it reads GAGKGT. The tract at residues 30–59 is NMP; sequence STGDMFRAAMANQTEMGRLAKSYIDKGELV. Residues threonine 31, arginine 36, 57–59, 86–89, and glutamine 93 each bind AMP; these read ELV and GYPR. Positions 127–159 are LID; it reads GRIINRKTGETFHKVFNPPVDYKEEDYYQREDD. ATP is bound by residues arginine 128 and 137 to 138; that span reads TF. Residues arginine 156 and arginine 167 each coordinate AMP. Residue glutamine 195 coordinates ATP.

The protein belongs to the adenylate kinase family. Monomer.

The protein localises to the cytoplasm. It catalyses the reaction AMP + ATP = 2 ADP. It participates in purine metabolism; AMP biosynthesis via salvage pathway; AMP from ADP: step 1/1. Catalyzes the reversible transfer of the terminal phosphate group between ATP and AMP. Plays an important role in cellular energy homeostasis and in adenine nucleotide metabolism. The protein is Adenylate kinase of Streptococcus agalactiae serotype III (strain NEM316).